Here is a 305-residue protein sequence, read N- to C-terminus: Probable L-ribulose-5-phosphate 3-epimerase UlaE (305 aa).

Belongs to the L-ribulose-5-phosphate 3-epimerase family.

It catalyses the reaction L-ribulose 5-phosphate = L-xylulose 5-phosphate. It functions in the pathway cofactor degradation; L-ascorbate degradation; D-xylulose 5-phosphate from L-ascorbate: step 3/4. Functionally, catalyzes the isomerization of L-xylulose-5-phosphate to L-ribulose-5-phosphate. Is involved in the anaerobic L-ascorbate utilization. The sequence is that of Probable L-ribulose-5-phosphate 3-epimerase UlaE (ulaE) from Mycoplasma pneumoniae (strain ATCC 29342 / M129 / Subtype 1) (Mycoplasmoides pneumoniae).